The following is a 391-amino-acid chain: Ferrochelatase (391 aa).

Residues histidine 196 and glutamate 281 each coordinate Fe cation.

This sequence belongs to the ferrochelatase family.

The protein resides in the cytoplasm. The catalysed reaction is heme b + 2 H(+) = protoporphyrin IX + Fe(2+). It participates in porphyrin-containing compound metabolism; protoheme biosynthesis; protoheme from protoporphyrin-IX: step 1/1. Its function is as follows. Catalyzes the ferrous insertion into protoporphyrin IX. This is Ferrochelatase from Prochlorococcus marinus (strain NATL2A).